Reading from the N-terminus, the 252-residue chain is Imidazole glycerol phosphate synthase subunit HisF (252 aa).

Active-site residues include Asp11 and Asp130.

Belongs to the HisA/HisF family. In terms of assembly, heterodimer of HisH and HisF.

It is found in the cytoplasm. The catalysed reaction is 5-[(5-phospho-1-deoxy-D-ribulos-1-ylimino)methylamino]-1-(5-phospho-beta-D-ribosyl)imidazole-4-carboxamide + L-glutamine = D-erythro-1-(imidazol-4-yl)glycerol 3-phosphate + 5-amino-1-(5-phospho-beta-D-ribosyl)imidazole-4-carboxamide + L-glutamate + H(+). It functions in the pathway amino-acid biosynthesis; L-histidine biosynthesis; L-histidine from 5-phospho-alpha-D-ribose 1-diphosphate: step 5/9. IGPS catalyzes the conversion of PRFAR and glutamine to IGP, AICAR and glutamate. The HisF subunit catalyzes the cyclization activity that produces IGP and AICAR from PRFAR using the ammonia provided by the HisH subunit. The chain is Imidazole glycerol phosphate synthase subunit HisF from Bacillus cereus (strain Q1).